A 78-amino-acid polypeptide reads, in one-letter code: Apolipoprotein C-I (78 aa).

The first 26 residues, 1-26 (MRLILWLPVLVVVLLMVLEGPAPAQG), serve as a signal peptide directing secretion.

This sequence belongs to the apolipoprotein C1 family.

Its subcellular location is the secreted. Its function is as follows. Inhibitor of lipoprotein binding to the low density lipoprotein (LDL) receptor, LDL receptor-related protein, and very low density lipoprotein (VLDL) receptor. Associates with high density lipoproteins (HDL) and the triacylglycerol-rich lipoproteins in the plasma and makes up about 10% of the protein of the VLDL and 2% of that of HDL. Appears to interfere directly with fatty acid uptake and is also the major plasma inhibitor of cholesteryl ester transfer protein (CETP). Binds free fatty acids and reduces their intracellular esterification. Modulates the interaction of APOE with beta-migrating VLDL and inhibits binding of beta-VLDL to the LDL receptor-related protein. The protein is Apolipoprotein C-I (APOC1) of Puma concolor (Mountain lion).